A 105-amino-acid chain; its full sequence is Large ribosomal subunit protein uL24 (105 aa).

Basic and acidic residues predominate over residues 77–93 (DGKPTRVGYRKDDETGK). Positions 77-105 (DGKPTRVGYRKDDETGKNVRIAKSNGKDL) are disordered.

This sequence belongs to the universal ribosomal protein uL24 family. As to quaternary structure, part of the 50S ribosomal subunit.

Functionally, one of two assembly initiator proteins, it binds directly to the 5'-end of the 23S rRNA, where it nucleates assembly of the 50S subunit. One of the proteins that surrounds the polypeptide exit tunnel on the outside of the subunit. This Mycolicibacterium gilvum (strain PYR-GCK) (Mycobacterium gilvum (strain PYR-GCK)) protein is Large ribosomal subunit protein uL24.